A 218-amino-acid polypeptide reads, in one-letter code: Vacuolar protein-sorting-associated protein 37 homolog 2 (218 aa).

Residues 1–51 (MFNFWGSKEQQQGQSRPSPEASATPWYSPSLVTSPSSSRPQTSGQIPSHVS) form a disordered region. Residues 8–17 (KEQQQGQSRP) are compositionally biased toward polar residues. A compositionally biased stretch (low complexity) spans 28–40 (SPSLVTSPSSSRP). Residues 137 to 218 (QEKLNELENQ…HLAAKTSSIG (82 aa)) form the VPS37 C-terminal domain.

It belongs to the VPS37 family. As to quaternary structure, component of the endosomal sorting required for transport complex I (ESCRT-I), composed of ELC, VPS28 and VPS37. Interacts with ELC.

It localises to the endosome. In terms of biological role, component of the ESCRT-I complex (endosomal sorting complex required for transport I), a regulator of vesicular trafficking process. Required for the sorting of endocytic ubiquitinated cargos into multivesicular bodies (MVBs). The protein is Vacuolar protein-sorting-associated protein 37 homolog 2 (VPS37-2) of Arabidopsis thaliana (Mouse-ear cress).